The primary structure comprises 816 residues: H(+)/Cl(-) exchange transporter 5 (816 aa).

Positions 1–28 are disordered; sequence MAMWQGAMDNRGFQQGSFNSFQSSSSDE. Topologically, residues 1–124 are cytoplasmic; it reads MAMWQGAMDN…WALIHSVSDA (124 aa). Positions 12–25 are enriched in low complexity; that stretch reads GFQQGSFNSFQSSS. 2 helical membrane passes run 125 to 162 and 208 to 231; these read FSGW…ICTE and VNYF…VKVF. The Selectivity filter part_1 motif lies at 237 to 241; sequence GSGIP. Ser238 is a binding site for chloride. Positions 240 to 247 form an intramembrane region, helical; the sequence is IPEIKTIL. The next 2 helical transmembrane spans lie at 256–275 and 281–300; these read LGKW…VSSG and EGPL…HCFN. The Selectivity filter part_2 motif lies at 279 to 283; the sequence is GKEGP. 2 consecutive intramembrane regions (helical) follow at residues 312–324 and 328–336; these read VLSA…VSVA and PIGGVLFSL. 5 consecutive transmembrane segments (helical) span residues 348–366, 389–414, 422–442, 498–518, and 523–542; these read LWRS…RSIN, LVPF…IAWC, LGKY…ILAF, MWQL…TFGM, and GLFI…LGVG. Positions 523 to 527 match the Selectivity filter part_3 motif; that stretch reads GLFIP. Phe525 lines the chloride pocket. The helical intramembrane region spans 570-584; the sequence is GLYAMVGAAACLGGV. An intramembrane region (note=Loop between two helices) is located at residues 585 to 587; sequence TRM. An intramembrane region (helical) is located at residues 588–599; sequence TVSLVVIMFELT. An intramembrane region (note=Loop between two helices) is located at residues 600–604; the sequence is GGLEY. A helical transmembrane segment spans residues 605-622; sequence IVPLMAAAMTSKWVADAL. At 623-816 the chain is on the cytoplasmic side; that stretch reads GREGIYDAHI…NQDPDSILFN (194 aa). Tyr628 is a binding site for chloride. CBS domains lie at 656–720 and 752–812; these read MKPR…ARKK and ILDL…DPDS. ATP is bound by residues Thr666, 687–689, and 794–797; these read YSG and TKKD.

Belongs to the chloride channel (TC 2.A.49) family. ClC-5/CLCN5 subfamily. As to quaternary structure, interacts with NEDD4 and NEDD4L. In terms of processing, ubiquitinated by NEDD4L in the presence of albumin; which promotes endocytosis and proteasomal degradation.

The protein localises to the golgi apparatus membrane. It localises to the endosome membrane. It is found in the cell membrane. It catalyses the reaction 2 chloride(in) + H(+)(out) = 2 chloride(out) + H(+)(in). In terms of biological role, proton-coupled chloride transporter. Functions as antiport system and exchanges chloride ions against protons. Important for normal acidification of the endosome lumen. May play an important role in renal tubular function. The CLC channel family contains both chloride channels and proton-coupled anion transporters that exchange chloride or another anion for protons. The absence of conserved gating glutamate residues is typical for family members that function as channels. The sequence is that of H(+)/Cl(-) exchange transporter 5 (CLCN5) from Sus scrofa (Pig).